The sequence spans 367 residues: Alginate lyase (367 aa).

Residues 1 to 24 form the signal peptide; the sequence is MTIFKRISSPALLALALFGGAAHA. Substrate is bound by residues 63–64, 136–137, and Tyr-254; these read SK and HT.

The protein belongs to the polysaccharide lyase 5 family.

It is found in the periplasm. The enzyme catalyses Eliminative cleavage of alginate to give oligosaccharides with 4-deoxy-alpha-L-erythro-hex-4-enuronosyl groups at their non-reducing ends and beta-D-mannuronate at their reducing end.. Catalyzes the depolymerization of alginate by cleaving the beta-1,4 glycosidic bond between two adjacent sugar residues via a beta-elimination mechanism. May serve to degrade mislocalized alginate that is trapped in the periplasmic space. This Pseudomonas putida (strain ATCC 700007 / DSM 6899 / JCM 31910 / BCRC 17059 / LMG 24140 / F1) protein is Alginate lyase.